The following is a 246-amino-acid chain: 5'-nucleotidase SurE (246 aa).

Positions 8, 9, 39, and 91 each coordinate a divalent metal cation.

The protein belongs to the SurE nucleotidase family. Requires a divalent metal cation as cofactor.

It is found in the cytoplasm. The enzyme catalyses a ribonucleoside 5'-phosphate + H2O = a ribonucleoside + phosphate. In terms of biological role, nucleotidase that shows phosphatase activity on nucleoside 5'-monophosphates. The protein is 5'-nucleotidase SurE of Actinobacillus succinogenes (strain ATCC 55618 / DSM 22257 / CCUG 43843 / 130Z).